Consider the following 311-residue polypeptide: uncharacterized protein (311 aa).

The N-terminal stretch at 1–13 is a signal peptide; it reads MLLSLIFPIAVLG. An N-linked (GlcNAc...) asparagine glycan is attached at Asn115.

Its subcellular location is the secreted. This is an uncharacterized protein from Encephalitozoon cuniculi (strain GB-M1) (Microsporidian parasite).